Here is an 89-residue protein sequence, read N- to C-terminus: Small ribosomal subunit protein uS19 (89 aa).

It belongs to the universal ribosomal protein uS19 family.

Its function is as follows. Protein S19 forms a complex with S13 that binds strongly to the 16S ribosomal RNA. The protein is Small ribosomal subunit protein uS19 of Akkermansia muciniphila (strain ATCC BAA-835 / DSM 22959 / JCM 33894 / BCRC 81048 / CCUG 64013 / CIP 107961 / Muc).